Here is a 485-residue protein sequence, read N- to C-terminus: Ribulose bisphosphate carboxylase large chain (485 aa).

Asn-124 and Thr-174 together coordinate substrate. Lys-176 (proton acceptor) is an active-site residue. Lys-178 is a substrate binding site. The Mg(2+) site is built by Lys-202, Asp-204, and Glu-205. Lys-202 carries the N6-carboxylysine modification. The Proton acceptor role is filled by His-294. Substrate-binding residues include Arg-295, His-327, and Ser-379.

Belongs to the RuBisCO large chain family. Type I subfamily. As to quaternary structure, heterohexadecamer of 8 large chains and 8 small chains. Mg(2+) serves as cofactor.

The catalysed reaction is 2 (2R)-3-phosphoglycerate + 2 H(+) = D-ribulose 1,5-bisphosphate + CO2 + H2O. The enzyme catalyses D-ribulose 1,5-bisphosphate + O2 = 2-phosphoglycolate + (2R)-3-phosphoglycerate + 2 H(+). Its function is as follows. RuBisCO catalyzes two reactions: the carboxylation of D-ribulose 1,5-bisphosphate, the primary event in carbon dioxide fixation, as well as the oxidative fragmentation of the pentose substrate. Both reactions occur simultaneously and in competition at the same active site. This Rhodopseudomonas palustris (strain HaA2) protein is Ribulose bisphosphate carboxylase large chain.